Here is a 154-residue protein sequence, read N- to C-terminus: Plastocyanin, chloroplastic (154 aa).

The N-terminal 57 residues, 1 to 57 (MAALSSAAVTIPSMAPSAPGRRRMRSSLVVRASLGKAAGAAAVAVAASAMLAGGAMA), are a transit peptide targeting the chloroplast. The Plastocyanin-like domain maps to 58 to 154 (QEVLLGANGG…AGMVGKVTVN (97 aa)). 4 residues coordinate Cu cation: histidine 94, cysteine 139, histidine 142, and methionine 147.

Belongs to the plastocyanin family. The cofactor is Cu(2+).

It localises to the plastid. The protein resides in the chloroplast thylakoid membrane. In terms of biological role, participates in electron transfer between P700 and the cytochrome b6-f complex in photosystem I. The polypeptide is Plastocyanin, chloroplastic (PETE) (Oryza sativa subsp. indica (Rice)).